The chain runs to 555 residues: GPI-anchor transamidase component PIGS (555 aa).

Over alanine 2–arginine 18 the chain is Cytoplasmic. A cardiolipin-binding residues include arginine 15 and arginine 18. The helical transmembrane segment at alanine 19–threonine 39 threads the bilayer. The Lumenal segment spans residues glutamate 40–glutamine 517. Residues asparagine 267 and asparagine 370 are each glycosylated (N-linked (GlcNAc...) asparagine). The helical transmembrane segment at lysine 518–proline 532 threads the bilayer. Topologically, residues isoleucine 533–aspartate 555 are cytoplasmic.

Belongs to the PIGS family. Heteropentamer. Part of the GPI-anchor transamidase complex, consisting of PIGK, PIGT, PIGS, PIGU and GAA1.

The protein resides in the endoplasmic reticulum membrane. Its pathway is glycolipid biosynthesis; glycosylphosphatidylinositol-anchor biosynthesis. In terms of biological role, component of the glycosylphosphatidylinositol-anchor (GPI-anchor) transamidase (GPI-T) complex that catalyzes the formation of the linkage between a proprotein and a GPI-anchor and participates in GPI anchored protein biosynthesis. This is GPI-anchor transamidase component PIGS from Rattus norvegicus (Rat).